The chain runs to 288 residues: Acetyl-coenzyme A carboxylase carboxyl transferase subunit beta (288 aa).

In terms of domain architecture, CoA carboxyltransferase N-terminal spans 32–288; it reads LFAKCPACKH…LELHTEVENV (257 aa). Positions 36, 39, 54, and 57 each coordinate Zn(2+). The C4-type zinc finger occupies 36–57; it reads CPACKHTIYQKDLGKNKVCPNC.

Belongs to the AccD/PCCB family. Acetyl-CoA carboxylase is a heterohexamer composed of biotin carboxyl carrier protein (AccB), biotin carboxylase (AccC) and two subunits each of ACCase subunit alpha (AccA) and ACCase subunit beta (AccD). It depends on Zn(2+) as a cofactor.

It localises to the cytoplasm. It catalyses the reaction N(6)-carboxybiotinyl-L-lysyl-[protein] + acetyl-CoA = N(6)-biotinyl-L-lysyl-[protein] + malonyl-CoA. It participates in lipid metabolism; malonyl-CoA biosynthesis; malonyl-CoA from acetyl-CoA: step 1/1. In terms of biological role, component of the acetyl coenzyme A carboxylase (ACC) complex. Biotin carboxylase (BC) catalyzes the carboxylation of biotin on its carrier protein (BCCP) and then the CO(2) group is transferred by the transcarboxylase to acetyl-CoA to form malonyl-CoA. The protein is Acetyl-coenzyme A carboxylase carboxyl transferase subunit beta of Lactococcus lactis subsp. cremoris (strain SK11).